We begin with the raw amino-acid sequence, 651 residues long: Bromodomain-containing protein 7 (651 aa).

Lys21 is covalently cross-linked (Glycyl lysine isopeptide (Lys-Gly) (interchain with G-Cter in SUMO2)). The span at 35–45 shows a compositional bias: polar residues; that stretch reads TELSTGSSGHD. A disordered region spans residues 35 to 132; sequence TELSTGSSGH…SSLAKQEEVE (98 aa). Positions 47–57 are enriched in basic and acidic residues; it reads SLFEDKNDHDK. Lys52 is covalently cross-linked (Glycyl lysine isopeptide (Lys-Gly) (interchain with G-Cter in SUMO2)). Residues 58-69 are compositionally biased toward basic residues; sequence HKDRKRKKRKKG. Residues 65–96 carry the Nuclear localization signal motif; it reads KRKKGEKQIPGEEKGRKRRRVKEDKKKRDRDR. A compositionally biased stretch (basic and acidic residues) spans 70–106; sequence EKQIPGEEKGRKRRRVKEDKKKRDRDRVENEAEKDLQ. Residues Lys127, Lys186, Lys197, Lys201, Lys212, and Lys241 each participate in a glycyl lysine isopeptide (Lys-Gly) (interchain with G-Cter in SUMO2) cross-link. Positions 131-235 constitute a Bromo domain; that stretch reads VEQTPLQEAL…HSGMKILSQE (105 aa). The disordered stretch occupies residues 253–301; that stretch reads TRKQKDGTDTSQSGEDGGCWQREREDSGDAEAHAFKSPSKENKKKDKDM. A compositionally biased stretch (basic and acidic residues) spans 273–301; that stretch reads QREREDSGDAEAHAFKSPSKENKKKDKDM. Ser279 and Ser289 each carry phosphoserine. Residues Lys305 and Lys307 each participate in a glycyl lysine isopeptide (Lys-Gly) (interchain with G-Cter in SUMO2) cross-link. Lys328 carries the post-translational modification N6-acetyllysine. Lys344 participates in a covalent cross-link: Glycyl lysine isopeptide (Lys-Gly) (interchain with G-Cter in SUMO2). The residue at position 380 (Ser380) is a Phosphoserine. Lys389 participates in a covalent cross-link: Glycyl lysine isopeptide (Lys-Gly) (interchain with G-Cter in SUMO2). Phosphoserine is present on Ser482. Residue Thr514 is modified to Phosphothreonine. Residues 536–567 adopt a coiled-coil conformation; that stretch reads SEEAEIFQKKLDETTRLLRELQEAQNERLSTR. Position 621 is a phosphoserine (Ser621).

Interacts with TRIM24, PTPN13 and DVL1. Identified in a complex with SMARCA4/BRG1, SMARCC1/BAF155, SMARCE1/BAF57, DPF2/BAF45D and ARID2, subunits of the SWI/SNF-B (PBAF) chromatin remodeling complex. Interacts with IRF2 and HNRPUL1. Interacts (via N-terminus) with TP53. Interacts (via C-terminus) with EP300. Interacts with BRCA1. Interacts (via bromo domain) with histone H3 (via N-terminus) acetylated at 'Lys-14' (H3K14ac). Has low affinity for histone H3 acetylated at 'Lys-9' (H3K9ac). Has the highest affinity for histone H3 that is acetylated both at 'Lys-9' (H3K9ac) and at 'Lys-14' (H3K14ac). Has very low affinity for non-acetylated histone H3. Interacts (via bromo domain) with histone H4 (via N-terminus) acetylated at 'Lys-8' (H3K8ac) (in vitro).

It localises to the nucleus. The protein localises to the chromosome. Its function is as follows. Acts both as coactivator and as corepressor. May play a role in chromatin remodeling. Activator of the Wnt signaling pathway in a DVL1-dependent manner by negatively regulating the GSK3B phosphotransferase activity. Induces dephosphorylation of GSK3B at 'Tyr-216'. Down-regulates TRIM24-mediated activation of transcriptional activation by AR. Transcriptional corepressor that down-regulates the expression of target genes. Binds to target promoters, leading to increased histone H3 acetylation at 'Lys-9' (H3K9ac). Binds to the ESR1 promoter. Recruits BRCA1 and POU2F1 to the ESR1 promoter. Coactivator for TP53-mediated activation of transcription of a set of target genes. Required for TP53-mediated cell-cycle arrest in response to oncogene activation. Promotes acetylation of TP53 at 'Lys-382', and thereby promotes efficient recruitment of TP53 to target promoters. Inhibits cell cycle progression from G1 to S phase. The protein is Bromodomain-containing protein 7 (BRD7) of Homo sapiens (Human).